A 410-amino-acid chain; its full sequence is Peptidase T (410 aa).

His-78 contacts Zn(2+). Residue Asp-80 is part of the active site. Residue Asp-139 coordinates Zn(2+). The active-site Proton acceptor is Glu-173. 3 residues coordinate Zn(2+): Glu-174, Asp-196, and His-378.

The protein belongs to the peptidase M20B family. Zn(2+) is required as a cofactor.

Its subcellular location is the cytoplasm. It carries out the reaction Release of the N-terminal residue from a tripeptide.. Cleaves the N-terminal amino acid of tripeptides. In Shewanella woodyi (strain ATCC 51908 / MS32), this protein is Peptidase T.